The sequence spans 226 residues: Probable endonuclease LCL3 (226 aa).

A helical transmembrane segment spans residues 15–32; that stretch reads VFYTSILTGGILSSFYVY. Residues 53 to 212 form the TNase-like domain; the sequence is RTLFGRVTSV…RKKKIGMFQQ (160 aa). The active site involves Arg-103. Ca(2+) is bound at residue Asp-108. Residues Glu-111 and Arg-151 contribute to the active site.

This sequence belongs to the LCL3 family.

Its subcellular location is the mitochondrion. The protein localises to the membrane. In Yarrowia lipolytica (strain CLIB 122 / E 150) (Yeast), this protein is Probable endonuclease LCL3 (LCL3).